Here is a 267-residue protein sequence, read N- to C-terminus: Ubiquinone biosynthesis protein COQ4 homolog, mitochondrial (267 aa).

4 residues coordinate Zn(2+): H170, D171, H174, and E186.

This sequence belongs to the COQ4 family. As to quaternary structure, component of a multi-subunit COQ enzyme complex. The cofactor is Zn(2+).

The protein localises to the mitochondrion inner membrane. It catalyses the reaction a 4-hydroxy-3-methoxy-5-(all-trans-polyprenyl)benzoate + H(+) = a 2-methoxy-6-(all-trans-polyprenyl)phenol + CO2. It participates in cofactor biosynthesis; ubiquinone biosynthesis. In terms of biological role, lyase that catalyzes the C1-decarboxylation of 4-hydroxy-3-methoxy-5-(all-trans-polyprenyl)benzoic acid into 2-methoxy-6-(all-trans-polyprenyl)phenol during ubiquinone biosynthesis. This chain is Ubiquinone biosynthesis protein COQ4 homolog, mitochondrial, found in Drosophila pseudoobscura pseudoobscura (Fruit fly).